The following is a 279-amino-acid chain: 1-(5-phosphoribosyl)-5-[(5-phosphoribosylamino)methylideneamino] imidazole-4-carboxamide isomerase (279 aa).

This sequence belongs to the HisA/HisF family.

The protein localises to the cytoplasm. The catalysed reaction is 1-(5-phospho-beta-D-ribosyl)-5-[(5-phospho-beta-D-ribosylamino)methylideneamino]imidazole-4-carboxamide = 5-[(5-phospho-1-deoxy-D-ribulos-1-ylimino)methylamino]-1-(5-phospho-beta-D-ribosyl)imidazole-4-carboxamide. Its pathway is amino-acid biosynthesis; L-histidine biosynthesis; L-histidine from 5-phospho-alpha-D-ribose 1-diphosphate: step 4/9. The protein is 1-(5-phosphoribosyl)-5-[(5-phosphoribosylamino)methylideneamino] imidazole-4-carboxamide isomerase (HIS6) of Candida albicans (Yeast).